Reading from the N-terminus, the 372-residue chain is N-acetyllactosaminide beta-1,3-N-acetylglucosaminyltransferase 3 (372 aa).

At 1–10 (MKYLRHRRPN) the chain is on the cytoplasmic side. Residues 11 to 31 (ATLILAIGAFTLLLFSLLVSP) form a helical; Signal-anchor for type II membrane protein membrane-spanning segment. Topologically, residues 32–372 (PTCKVQEQPP…LTCGNQTQIY (341 aa)) are lumenal. 5 N-linked (GlcNAc...) asparagine glycosylation sites follow: Asn64, Asn184, Asn202, Asn362, and Asn367.

Belongs to the glycosyltransferase 31 family. In terms of tissue distribution, expressed in colon, jejunum, stomach, esophagus, placenta and trachea.

It is found in the golgi apparatus membrane. It carries out the reaction a 3-O-{beta-D-galactosyl-(1-&gt;3)-[N-acetyl-beta-D-glucosaminyl-(1-&gt;6)]-N-acetyl-alpha-D-galactosaminyl}-L-threonyl-[protein] + UDP-N-acetyl-alpha-D-glucosamine = 3-O-{beta-D-GlcNAc-(1-&gt;3)-beta-D-Gal-(1-&gt;3)-[beta-D-GlcNAc-(1-&gt;6)]-alpha-D-GalNAc}-L-threonyl-[protein] + UDP + H(+). The enzyme catalyses 3-O-{beta-D-galactosyl-(1-&gt;3)-[N-acetyl-beta-D-glucosaminyl-(1-&gt;6)]-N-acetyl-alpha-D-galactosaminyl}-L-seryl-[protein] + UDP-N-acetyl-alpha-D-glucosamine = 3-O-{beta-D-GlcNAc-(1-&gt;3)-beta-D-Gal-(1-&gt;3)-[beta-D-GlcNAc-(1-&gt;6)]-alpha-D-GalNAc}-L-seryl-[protein] + UDP + H(+). It catalyses the reaction a beta-D-galactosyl-(1-&gt;4)-N-acetyl-beta-D-glucosaminyl derivative + UDP-N-acetyl-alpha-D-glucosamine = an N-acetyl-beta-D-glucosaminyl-(1-&gt;3)-beta-D-galactosyl-(1-&gt;4)-N-acetyl-beta-D-glucosaminyl derivative + UDP + H(+). The protein operates within protein modification; protein glycosylation. Functionally, beta-1,3-N-acetylglucosaminyltransferase involved in the synthesis of poly-N-acetyllactosamine. Has activity for type 2 oligosaccharides. Also acts as a core1-1,3-N-acetylglucosaminyltransferase (Core1-beta3GlcNAcT) to form the 6-sulfo sialyl Lewis x on extended core1 O-glycans. The chain is N-acetyllactosaminide beta-1,3-N-acetylglucosaminyltransferase 3 (B3GNT3) from Homo sapiens (Human).